The sequence spans 246 residues: Carboxy-S-adenosyl-L-methionine synthase (246 aa).

S-adenosyl-L-methionine contacts are provided by residues Tyr-43, 68-70 (GCS), 93-94 (DN), 121-122 (DI), Asn-136, and Arg-203.

The protein belongs to the class I-like SAM-binding methyltransferase superfamily. Cx-SAM synthase family. As to quaternary structure, homodimer.

It catalyses the reaction prephenate + S-adenosyl-L-methionine = carboxy-S-adenosyl-L-methionine + 3-phenylpyruvate + H2O. Catalyzes the conversion of S-adenosyl-L-methionine (SAM) to carboxy-S-adenosyl-L-methionine (Cx-SAM). This chain is Carboxy-S-adenosyl-L-methionine synthase, found in Vibrio cholerae serotype O1 (strain ATCC 39541 / Classical Ogawa 395 / O395).